The following is a 174-amino-acid chain: Methylated protein MJ0556 (174 aa).

CBS domains are found at residues 28 to 87 (MISG…YLNV) and 91 to 156 (MLKN…IIKE).

Post-translationally, methylated at an undetermined residue between Ser-2 and Asp-26.

This is Methylated protein MJ0556 from Methanocaldococcus jannaschii (strain ATCC 43067 / DSM 2661 / JAL-1 / JCM 10045 / NBRC 100440) (Methanococcus jannaschii).